The chain runs to 61 residues: Small ribosomal subunit protein uS14 (61 aa).

Positions 24, 27, 40, and 43 each coordinate Zn(2+).

This sequence belongs to the universal ribosomal protein uS14 family. Zinc-binding uS14 subfamily. As to quaternary structure, part of the 30S ribosomal subunit. Contacts proteins S3 and S10. Zn(2+) serves as cofactor.

Binds 16S rRNA, required for the assembly of 30S particles and may also be responsible for determining the conformation of the 16S rRNA at the A site. This is Small ribosomal subunit protein uS14 from Mesoplasma florum (strain ATCC 33453 / NBRC 100688 / NCTC 11704 / L1) (Acholeplasma florum).